Here is a 101-residue protein sequence, read N- to C-terminus: uncharacterized protein (101 aa).

This is an uncharacterized protein from Mycoplasma pneumoniae (strain ATCC 29342 / M129 / Subtype 1) (Mycoplasmoides pneumoniae).